A 563-amino-acid polypeptide reads, in one-letter code: Anaerobic glycerol-3-phosphate dehydrogenase subunit A (563 aa).

20–48 contributes to the FAD binding site; that stretch reads DVIIIGGGATGAGIARDCALRGIDCILLE.

This sequence belongs to the FAD-dependent glycerol-3-phosphate dehydrogenase family. Composed of a catalytic GlpA/B dimer and of membrane bound GlpC. The cofactor is FAD. FMN serves as cofactor.

The protein localises to the cell inner membrane. It catalyses the reaction a quinone + sn-glycerol 3-phosphate = dihydroxyacetone phosphate + a quinol. The protein operates within polyol metabolism; glycerol degradation via glycerol kinase pathway; glycerone phosphate from sn-glycerol 3-phosphate (anaerobic route): step 1/1. In Haemophilus influenzae (strain ATCC 51907 / DSM 11121 / KW20 / Rd), this protein is Anaerobic glycerol-3-phosphate dehydrogenase subunit A (glpA).